We begin with the raw amino-acid sequence, 261 residues long: MSRIRQAFAALDGGKALIPYIAVGDPDIRTTLALMHGMVASGADILELGVPFSDPMADGPVIQRAAERALANGISLRDVLDVVRKFRETDTQTPVVLMGYLNPIHKMGYREFAQEAAKAGVDGVLTVDSPIETIDSLYRELKDNEVDCIFLIAPTTTEDRIKTIAELAGGFVYYVSLKGVTGAASLDTDEVSRKIEYLRQYIDIPIGVGFGISNAESARKIGRVAAAIIVGSRIVKEIENNAGNEAAAVGALVKELKDAVR.

Residues glutamate 47 and aspartate 58 each act as proton acceptor in the active site.

Belongs to the TrpA family. In terms of assembly, tetramer of two alpha and two beta chains.

It catalyses the reaction (1S,2R)-1-C-(indol-3-yl)glycerol 3-phosphate + L-serine = D-glyceraldehyde 3-phosphate + L-tryptophan + H2O. It functions in the pathway amino-acid biosynthesis; L-tryptophan biosynthesis; L-tryptophan from chorismate: step 5/5. Functionally, the alpha subunit is responsible for the aldol cleavage of indoleglycerol phosphate to indole and glyceraldehyde 3-phosphate. In Neisseria gonorrhoeae (strain ATCC 700825 / FA 1090), this protein is Tryptophan synthase alpha chain.